The sequence spans 83 residues: MSSGSLLLLLGLLTLLAELTPVSSRKRHPDCDKPPNKKRCTGHIPAFYYNPQRKTCERFSYGGCKGNGNHFKTPQLCMCHCHE.

The N-terminal stretch at 1–24 (MSSGSLLLLLGLLTLLAELTPVSS) is a signal peptide. A BPTI/Kunitz inhibitor domain is found at 31–81 (CDKPPNKKRCTGHIPAFYYNPQRKTCERFSYGGCKGNGNHFKTPQLCMCHC). 3 disulfide bridges follow: cysteine 31/cysteine 81, cysteine 40/cysteine 64, and cysteine 56/cysteine 77.

Belongs to the venom Kunitz-type family. In terms of assembly, heterodimer with beta-bungarotoxin A1 chain; disulfide-linked. The A chain has phospholipase A2 activity and the B chain shows homology with the basic protease inhibitors. In terms of tissue distribution, expressed by the venom gland.

It is found in the secreted. Functionally, beta-bungarotoxin is a presynaptic neurotoxin of the venom. The B chain is homologous to venom basic protease inhibitors but has no protease inhibitor activity and is non-toxic. The polypeptide is Kunitz-type serine protease inhibitor homolog beta-bungarotoxin B chain (Bungarus flaviceps flaviceps (Red-headed krait)).